Consider the following 959-residue polypeptide: Glycine dehydrogenase (decarboxylating) (959 aa).

Lys704 bears the N6-(pyridoxal phosphate)lysine mark.

The protein belongs to the GcvP family. As to quaternary structure, the glycine cleavage system is composed of four proteins: P, T, L and H. The cofactor is pyridoxal 5'-phosphate.

It catalyses the reaction N(6)-[(R)-lipoyl]-L-lysyl-[glycine-cleavage complex H protein] + glycine + H(+) = N(6)-[(R)-S(8)-aminomethyldihydrolipoyl]-L-lysyl-[glycine-cleavage complex H protein] + CO2. Functionally, the glycine cleavage system catalyzes the degradation of glycine. The P protein binds the alpha-amino group of glycine through its pyridoxal phosphate cofactor; CO(2) is released and the remaining methylamine moiety is then transferred to the lipoamide cofactor of the H protein. This is Glycine dehydrogenase (decarboxylating) from Parasynechococcus marenigrum (strain WH8102).